The primary structure comprises 400 residues: CinA-like protein (400 aa).

This sequence belongs to the CinA family.

In Escherichia coli (strain SE11), this protein is CinA-like protein.